We begin with the raw amino-acid sequence, 200 residues long: Transcriptional repressor NrdR (200 aa).

The segment at 3 to 34 (CPFCQNPDTKVIDTRISDDGHSIRRRRECPNC) is a zinc-finger region. The ATP-cone domain occupies 46–136 (LLVKKRSGNV…VYQNFEDLED (91 aa)).

The protein belongs to the NrdR family. Requires Zn(2+) as cofactor.

Negatively regulates transcription of bacterial ribonucleotide reductase nrd genes and operons by binding to NrdR-boxes. The sequence is that of Transcriptional repressor NrdR from Bifidobacterium animalis subsp. lactis (strain AD011).